The following is a 319-amino-acid chain: Type II secretion system protein C 2 (319 aa).

The Cytoplasmic segment spans residues 1-42; that stretch reads MARVVFRDARIYLIQWLTKIRHTLNQRQSLNTDKEHLRKIVR. Residues 43-65 form a helical membrane-spanning segment; the sequence is GMFWLMLLIISAKVAHSLWRYFS. The Periplasmic segment spans residues 66–319; the sequence is FSAEYTAVSP…ARHDISIALR (254 aa).

This sequence belongs to the GSP C family. As to quaternary structure, interacts with outer cell membrane protein GspD2 in the periplasm.

The protein localises to the cell inner membrane. In terms of biological role, involved in a type II secretion system (T2SS, formerly general secretion pathway, GSP) for the export of folded proteins across the outer membrane. This Escherichia coli O78:H11 (strain H10407 / ETEC) protein is Type II secretion system protein C 2 (gspC2).